Here is a 567-residue protein sequence, read N- to C-terminus: 2-isopropylmalate synthase (567 aa).

The 275-residue stretch at 28 to 302 (PQWCSVDLRD…NPELDFSDIN (275 aa)) folds into the Pyruvate carboxyltransferase domain. Mg(2+)-binding residues include Asp37, His241, His243, and Asn277. Residues 435–567 (IRTPLQLNYH…DMDTQEEDIA (133 aa)) are regulatory domain.

Belongs to the alpha-IPM synthase/homocitrate synthase family. LeuA type 2 subfamily. In terms of assembly, homodimer. The cofactor is Mg(2+).

Its subcellular location is the cytoplasm. The catalysed reaction is 3-methyl-2-oxobutanoate + acetyl-CoA + H2O = (2S)-2-isopropylmalate + CoA + H(+). The protein operates within amino-acid biosynthesis; L-leucine biosynthesis; L-leucine from 3-methyl-2-oxobutanoate: step 1/4. Functionally, catalyzes the condensation of the acetyl group of acetyl-CoA with 3-methyl-2-oxobutanoate (2-ketoisovalerate) to form 3-carboxy-3-hydroxy-4-methylpentanoate (2-isopropylmalate). The polypeptide is 2-isopropylmalate synthase (Acetoanaerobium sticklandii (strain ATCC 12662 / DSM 519 / JCM 1433 / CCUG 9281 / NCIMB 10654 / HF) (Clostridium sticklandii)).